A 143-amino-acid chain; its full sequence is Hemoglobin subunit alpha (143 aa).

One can recognise a Globin domain in the interval 2 to 143; sequence RFSQDDEVLI…IVHVLISLYR (142 aa). An O2-binding site is contributed by histidine 60. Histidine 89 lines the heme b pocket.

The protein belongs to the globin family. In terms of assembly, heterotetramer of two alpha chains and two beta chains. In terms of tissue distribution, red blood cells.

Its function is as follows. Involved in oxygen transport from the lung to the various peripheral tissues. The chain is Hemoglobin subunit alpha (HBA) from Lepidosiren paradoxus (South American lungfish).